Here is a 341-residue protein sequence, read N- to C-terminus: Ketol-acid reductoisomerase (NADP(+)) (341 aa).

A KARI N-terminal Rossmann domain is found at 1–182; sequence MATIYYDKDA…GCTRAGVLET (182 aa). NADP(+) contacts are provided by residues 25–28, Ser-51, Ser-53, and 83–86; these read YGSQ and DQTQ. His-108 is a catalytic residue. Gly-134 is an NADP(+) binding site. Residues 183–328 form the KARI C-terminal knotted domain; it reads TFKEETETDL…KRLRDMMSWI (146 aa). Mg(2+)-binding residues include Asp-191, Glu-195, Glu-227, and Glu-231. Ser-252 serves as a coordination point for substrate.

Belongs to the ketol-acid reductoisomerase family. Mg(2+) is required as a cofactor.

It catalyses the reaction (2R)-2,3-dihydroxy-3-methylbutanoate + NADP(+) = (2S)-2-acetolactate + NADPH + H(+). The catalysed reaction is (2R,3R)-2,3-dihydroxy-3-methylpentanoate + NADP(+) = (S)-2-ethyl-2-hydroxy-3-oxobutanoate + NADPH + H(+). It functions in the pathway amino-acid biosynthesis; L-isoleucine biosynthesis; L-isoleucine from 2-oxobutanoate: step 2/4. The protein operates within amino-acid biosynthesis; L-valine biosynthesis; L-valine from pyruvate: step 2/4. Functionally, involved in the biosynthesis of branched-chain amino acids (BCAA). Catalyzes an alkyl-migration followed by a ketol-acid reduction of (S)-2-acetolactate (S2AL) to yield (R)-2,3-dihydroxy-isovalerate. In the isomerase reaction, S2AL is rearranged via a Mg-dependent methyl migration to produce 3-hydroxy-3-methyl-2-ketobutyrate (HMKB). In the reductase reaction, this 2-ketoacid undergoes a metal-dependent reduction by NADPH to yield (R)-2,3-dihydroxy-isovalerate. This Anaeromyxobacter dehalogenans (strain 2CP-C) protein is Ketol-acid reductoisomerase (NADP(+)).